The chain runs to 513 residues: Putative fucosyltransferase-like protein (513 aa).

Residues 1–34 are disordered; the sequence is MGVFSNLRGPRAGATHDEFPATNGSPSSSSSPSS. Over 1–39 the chain is Cytoplasmic; that stretch reads MGVFSNLRGPRAGATHDEFPATNGSPSSSSSPSSSIKRK. Low complexity predominate over residues 25–34; sequence SPSSSSSPSS. The helical; Signal-anchor for type II membrane protein transmembrane segment at 40–60 threads the bilayer; the sequence is LSNLLPLCVALVVIAEIGFLG. The Lumenal segment spans residues 61–513; sequence RLDKVALVDT…PCAKFEVVFV (453 aa). Residues asparagine 348 and asparagine 493 are each glycosylated (N-linked (GlcNAc...) asparagine).

It belongs to the glycosyltransferase 10 family.

Its subcellular location is the golgi apparatus. The protein localises to the golgi stack membrane. It functions in the pathway protein modification; protein glycosylation. Its function is as follows. May be involved in cell wall biosynthesis. May act as a fucosyltransferase. The polypeptide is Putative fucosyltransferase-like protein (FUT12) (Arabidopsis thaliana (Mouse-ear cress)).